Reading from the N-terminus, the 575-residue chain is Developmental and secondary metabolism regulator VEL1 (575 aa).

The Velvet domain maps to 21–225; it reads GRKLKYTLTV…AEQGCRVRIR (205 aa). Positions 35-40 match the Nuclear localization signal motif; the sequence is ERARAC. 2 disordered regions span residues 36–56 and 227–402; these read RARA…VDPP and DVRM…QSYE. Positions 274–284 are enriched in basic and acidic residues; it reads VHEDPQQRRGS. A compositionally biased stretch (polar residues) spans 294-308; the sequence is VVNTPFRTPSISPST. Residues 334–346 show a composition bias toward pro residues; it reads IQPPHPPPPPPSS. 2 stretches are compositionally biased toward polar residues: residues 355–365 and 385–402; these read HHNQGPSTQFR and SYSQ…QSYE. Positions 465-509 are PEST; it reads AEQPLAMSPLASVTSISRGTQNSAPMPSHNYNKLERSGSYSQYAP. The segment at 513–549 is disordered; the sequence is EAPKSTNKRSFNDVFSTPTESLSNGRRPSAIGIDIEE. The segment covering 516-538 has biased composition (polar residues); that stretch reads KSTNKRSFNDVFSTPTESLSNGR.

Belongs to the velvet family. VeA subfamily. Component of the heterotrimeric velvet complex composed of LAE1, VEL1 and VEL2; VEL1 acting as a bridging protein between LAE1 and VEL2.

Its subcellular location is the nucleus. The protein resides in the cytoplasm. Component of the velvet transcription factor complex that controls sexual/asexual developmental ratio in response to light, promoting sexual development in the darkness while stimulating asexual sporulation under illumination. The velvet complex hat acts as a global regulator for secondary metabolite gene expression. Controls the expression of the oxalic acid and melanin gene clusters. Also controls the expression of proteases and carbohydrate-active enzymes. Involved in the resistance to oxidative stress. Required for full virulence. The sequence is that of Developmental and secondary metabolism regulator VEL1 from Botryotinia fuckeliana (strain B05.10) (Noble rot fungus).